We begin with the raw amino-acid sequence, 366 residues long: tRNA-specific 2-thiouridylase MnmA (366 aa).

ATP contacts are provided by residues 6–13 and methionine 32; that span reads GLSGGVDS. Residue cysteine 96 is the Nucleophile of the active site. A disulfide bond links cysteine 96 and cysteine 196. An ATP-binding site is contributed by glycine 120. The interval 146–148 is interaction with tRNA; that stretch reads KDQ. Cysteine 196 functions as the Cysteine persulfide intermediate in the catalytic mechanism. The interval 302–303 is interaction with tRNA; sequence RY.

This sequence belongs to the MnmA/TRMU family.

It is found in the cytoplasm. The enzyme catalyses S-sulfanyl-L-cysteinyl-[protein] + uridine(34) in tRNA + AH2 + ATP = 2-thiouridine(34) in tRNA + L-cysteinyl-[protein] + A + AMP + diphosphate + H(+). Its function is as follows. Catalyzes the 2-thiolation of uridine at the wobble position (U34) of tRNA, leading to the formation of s(2)U34. The sequence is that of tRNA-specific 2-thiouridylase MnmA from Treponema denticola (strain ATCC 35405 / DSM 14222 / CIP 103919 / JCM 8153 / KCTC 15104).